Consider the following 91-residue polypeptide: UPF0250 protein PputGB1_4855 (91 aa).

This sequence belongs to the UPF0250 family.

This is UPF0250 protein PputGB1_4855 from Pseudomonas putida (strain GB-1).